Consider the following 30-residue polypeptide: Photosystem II reaction center protein Psb30 (30 aa).

Over Glu-1–Leu-6 the chain is Lumenal. A helical membrane pass occupies residues Thr-7–Phe-21. At Leu-22–Leu-30 the chain is on the cytoplasmic side.

This sequence belongs to the Psb30/Ycf12 family. PSII is composed of 1 copy each of membrane proteins PsbA, PsbB, PsbC, PsbD, PsbE, PsbF, PsbH, PsbI, PsbJ, PsbK, PsbL, PsbM, PsbT, PsbX, PsbY, PsbZ, Psb30/Ycf12, peripheral proteins PsbO, CyanoQ (PsbQ), PsbU, PsbV and a large number of cofactors. It forms dimeric complexes. It depends on PSII binds multiple chlorophylls, carotenoids and specific lipids. as a cofactor.

It is found in the cellular thylakoid membrane. Functionally, a core subunit of photosystem II (PSII), probably helps stabilize the reaction center. PSII is a light-driven water plastoquinone oxidoreductase, using light energy to abstract electrons from H(2)O, generating a proton gradient subsequently used for ATP formation. The polypeptide is Photosystem II reaction center protein Psb30 (Thermostichus vulcanus (Synechococcus vulcanus)).